A 1203-amino-acid chain; its full sequence is DNA-directed RNA polymerase subunit beta' (1203 aa).

Zn(2+) is bound by residues cysteine 60, cysteine 62, cysteine 75, and cysteine 78. Mg(2+) is bound by residues aspartate 449, aspartate 451, and aspartate 453. The Zn(2+) site is built by cysteine 818, cysteine 892, cysteine 899, and cysteine 902.

It belongs to the RNA polymerase beta' chain family. In terms of assembly, the RNAP catalytic core consists of 2 alpha, 1 beta, 1 beta' and 1 omega subunit. When a sigma factor is associated with the core the holoenzyme is formed, which can initiate transcription. Requires Mg(2+) as cofactor. The cofactor is Zn(2+).

It carries out the reaction RNA(n) + a ribonucleoside 5'-triphosphate = RNA(n+1) + diphosphate. Functionally, DNA-dependent RNA polymerase catalyzes the transcription of DNA into RNA using the four ribonucleoside triphosphates as substrates. In Bacillus mycoides (strain KBAB4) (Bacillus weihenstephanensis), this protein is DNA-directed RNA polymerase subunit beta'.